The chain runs to 317 residues: Small ribosomal subunit protein uS2 (317 aa).

Position 2 is an N-acetylserine (S2). Laminin-binding stretches follow at residues 161–180 and 205–229; these read IPCNNKGPHSVGLMWWMLAR and RDPEEIEKEEQAAAEKAVGKEEFQG. [DE]-W-[ST] repeat units follow at residues 230-232, 245-247, 288-290, 297-299, and 315-317; these read EWS and DWS. The laminin-binding stretch occupies residues 242-317; it reads EVPDWSEGVQ…DWGGSTAEWS (76 aa). The interval 278–317 is disordered; sequence PGPTTEGYSEDWSAQPATEDWSAAPTAQAGDWGGSTAEWS.

It belongs to the universal ribosomal protein uS2 family. Monomer (37LRP) and homodimer (67LR). Component of the small ribosomal subunit. Mature ribosomes consist of a small (40S) and a large (60S) subunit. The 40S subunit contains about 33 different proteins and 1 molecule of RNA (18S). The 60S subunit contains about 49 different proteins and 3 molecules of RNA (28S, 5.8S and 5S). Interacts with rps21. Interacts with several laminins including at least lamb1. Interacts with mdk. Acylated. Acylation may be a prerequisite for conversion of the monomeric 37 kDa laminin receptor precursor (37LRP) to the mature dimeric 67 kDa laminin receptor (67LR), and may provide a mechanism for membrane association. In terms of processing, cleaved by stromelysin-3 (ST3) at the cell surface. Cleavage by stromelysin-3 may be a mechanism to alter cell-extracellular matrix interactions.

The protein resides in the cell membrane. It is found in the cytoplasm. Its subcellular location is the nucleus. Functionally, required for the assembly and/or stability of the 40S ribosomal subunit. Required for the processing of the 20S rRNA-precursor to mature 18S rRNA in a late step of the maturation of 40S ribosomal subunits. Also functions as a cell surface receptor for laminin. Plays a role in cell adhesion to the basement membrane and in the consequent activation of signaling transduction pathways. May play a role in cell fate determination and tissue morphogenesis. This is Small ribosomal subunit protein uS2 (rpsa) from Ictalurus punctatus (Channel catfish).